We begin with the raw amino-acid sequence, 284 residues long: Nucleotide-binding protein TTE1834 (284 aa).

Position 8–15 (8–15 (GLSGAGKT)) interacts with ATP. 58–61 (DLRG) serves as a coordination point for GTP.

It belongs to the RapZ-like family.

Displays ATPase and GTPase activities. This is Nucleotide-binding protein TTE1834 from Caldanaerobacter subterraneus subsp. tengcongensis (strain DSM 15242 / JCM 11007 / NBRC 100824 / MB4) (Thermoanaerobacter tengcongensis).